The chain runs to 248 residues: Probable transcriptional regulatory protein PsycPRwf_1013 (248 aa).

The protein belongs to the TACO1 family.

Its subcellular location is the cytoplasm. In Psychrobacter sp. (strain PRwf-1), this protein is Probable transcriptional regulatory protein PsycPRwf_1013.